Here is a 1271-residue protein sequence, read N- to C-terminus: Period circadian protein (1271 aa).

Residues 1–14 (MEGESTESTQNTKV) show a composition bias toward polar residues. The segment at 1-102 (MEGESTESTQ…AEEQPHSSGT (102 aa)) is disordered. Low complexity predominate over residues 15-46 (SDSAYSNSCSNSQSQRSGSSKSMLSGSHSSGS). Positions 65–78 (KRNKEKSRKKKKAK) match the Nuclear localization signal motif. The span at 65 to 78 (KRNKEKSRKKKKAK) shows a compositional bias: basic residues. A compositionally biased stretch (polar residues) spans 80–90 (TQAQATISSSL). 2 consecutive PAS domains span residues 189 to 259 (TGPA…IPIA) and 339 to 409 (YRVP…MKKG). The tract at residues 596–660 (APVEVDPPKV…TNTSNAGTGT (65 aa)) is disordered. 3 tandem repeats follow at residues 657–658 (GT), 659–660 (GT), and 661–662 (GT). The segment at 657-677 (GTGTGTVTGTGTIIATSGTGT) is 8 X 2 AA approximate tandem repeats of G-T. The 4; approximate repeat unit spans residues 663–664 (VT). Tandem repeats lie at residues 665–666 (GT), 667–668 (GT), 674–675 (GT), and 676–677 (GT). Composition is skewed to polar residues over residues 746-772 (GAEN…NSAA) and 781-803 (GPDN…SGAE). Disordered stretches follow at residues 746–913 (GAEN…VEKN), 928–956 (EYSS…PKQQ), 1014–1050 (PAPG…QQAA), 1143–1191 (TPAQ…NSNQ), and 1227–1271 (KTTD…HGDG). Composition is skewed to basic and acidic residues over residues 805 to 822 (SRAE…HPRP) and 831 to 841 (RPDKTGPDKSG). Residues 864-884 (QDTRTTAGTPDSPPVSLTESL) show a composition bias toward polar residues. 2 stretches are compositionally biased toward basic and acidic residues: residues 885-896 (LNKHNDEMEKFM) and 903-913 (SRGDRRTVEKN). Residues 1014–1023 (PAPGALSPTP) show a composition bias toward low complexity. Residues 1025–1036 (NQKHHHHAHQHA) are compositionally biased toward basic residues. Residues 1143 to 1167 (TPAQLQRPSSQDTSVKTEPASNATP) are compositionally biased toward polar residues. Positions 1257–1271 (IMEHPEEDQTQHGDG) are enriched in basic and acidic residues.

In terms of assembly, forms a heterodimer with timeless (TIM); the complex then translocates into the nucleus. In terms of processing, phosphorylated with a circadian rhythmicity, probably by the double-time protein (dbt). Phosphorylation could be implicated in the stability of per monomer and in the formation of heterodimer per-tim.

It localises to the nucleus. The protein resides in the cytoplasm. Its subcellular location is the perinuclear region. Essential for biological clock functions. Determines the period length of circadian and ultradian rhythms; an increase in PER dosage leads to shortened circadian rhythms and a decrease leads to lengthened circadian rhythms. Essential for the circadian rhythmicity of locomotor activity, eclosion behavior, and for the rhythmic component of the male courtship song that originates in the thoracic nervous system. The biological cycle depends on the rhythmic formation and nuclear localization of the TIM-PER complex. Light induces the degradation of TIM, which promotes elimination of PER. Nuclear activity of the heterodimer coordinatively regulates PER and TIM transcription through a negative feedback loop. Behaves as a negative element in circadian transcriptional loop. Does not appear to bind DNA, suggesting indirect transcriptional inhibition. The chain is Period circadian protein (per) from Drosophila pseudoobscura pseudoobscura (Fruit fly).